Here is a 195-residue protein sequence, read N- to C-terminus: BH3-interacting domain death agonist (195 aa).

Residue M1 is modified to N-acetylmethionine. Polar residues predominate over residues 58–69 (TDGSQASRSFNQ). The disordered stretch occupies residues 58-77 (TDGSQASRSFNQGRIEPDSE). At S78 the chain carries Phosphoserine. Positions 87–100 (ARHLAQIGDEMDHN) match the BH3 motif.

As to quaternary structure, forms heterodimers either with the pro-apoptotic protein BAX or the anti-apoptotic protein BCL2. Interacts with PLEKHN1. In terms of assembly, interacts with ITCH. Interacts with MTCH2. TNF-alpha induces caspase-mediated cleavage into a major p15 and minor p13 and p11 products. Cleaved by CASP6 into a major p15 and minor p13 products, leading to release of cytochrome c and subsequent nonalcoholic steatohepatitis. Post-translationally, ubiquitinated by ITCH; ubiquitination results in proteasome-dependent degradation.

The protein localises to the cytoplasm. It is found in the mitochondrion membrane. Its subcellular location is the mitochondrion outer membrane. Induces caspases and apoptosis. Counters the protective effect of BCL2. Its function is as follows. Induces caspase activation and apoptosis. Allows the release of cytochrome c. The protein is BH3-interacting domain death agonist (Bid) of Mus musculus (Mouse).